We begin with the raw amino-acid sequence, 118 residues long: D-dopachrome decarboxylase (118 aa).

The residue at position 2 (proline 2) is an N-acetylproline. Lysine 33 is subject to N6-acetyllysine.

The protein belongs to the MIF family. Homotrimer. As to expression, highly expressed in the liver and at lower levels in the heart, lung and pancreas.

Its subcellular location is the cytoplasm. The catalysed reaction is D-dopachrome + H(+) = 5,6-dihydroxyindole + CO2. Functionally, tautomerization of D-dopachrome with decarboxylation to give 5,6-dihydroxyindole (DHI). This chain is D-dopachrome decarboxylase (DDT), found in Homo sapiens (Human).